The primary structure comprises 624 residues: 1-deoxy-D-xylulose-5-phosphate synthase (624 aa).

Thiamine diphosphate contacts are provided by residues His-80 and 121 to 123; that span reads GHS. Residue Asp-152 participates in Mg(2+) binding. Thiamine diphosphate contacts are provided by residues 153–154, Asn-181, Tyr-289, and Glu-371; that span reads GA. Asn-181 lines the Mg(2+) pocket.

This sequence belongs to the transketolase family. DXPS subfamily. As to quaternary structure, homodimer. Mg(2+) is required as a cofactor. The cofactor is thiamine diphosphate.

The enzyme catalyses D-glyceraldehyde 3-phosphate + pyruvate + H(+) = 1-deoxy-D-xylulose 5-phosphate + CO2. It functions in the pathway metabolic intermediate biosynthesis; 1-deoxy-D-xylulose 5-phosphate biosynthesis; 1-deoxy-D-xylulose 5-phosphate from D-glyceraldehyde 3-phosphate and pyruvate: step 1/1. Functionally, catalyzes the acyloin condensation reaction between C atoms 2 and 3 of pyruvate and glyceraldehyde 3-phosphate to yield 1-deoxy-D-xylulose-5-phosphate (DXP). This Blochmanniella pennsylvanica (strain BPEN) protein is 1-deoxy-D-xylulose-5-phosphate synthase.